A 417-amino-acid polypeptide reads, in one-letter code: Serine hydroxymethyltransferase (417 aa).

(6S)-5,6,7,8-tetrahydrofolate is bound by residues L121 and 125–127 (GHL). K230 carries the post-translational modification N6-(pyridoxal phosphate)lysine. A (6S)-5,6,7,8-tetrahydrofolate-binding site is contributed by 355–357 (SPF).

This sequence belongs to the SHMT family. As to quaternary structure, homodimer. The cofactor is pyridoxal 5'-phosphate.

The protein localises to the cytoplasm. The enzyme catalyses (6R)-5,10-methylene-5,6,7,8-tetrahydrofolate + glycine + H2O = (6S)-5,6,7,8-tetrahydrofolate + L-serine. Its pathway is one-carbon metabolism; tetrahydrofolate interconversion. It functions in the pathway amino-acid biosynthesis; glycine biosynthesis; glycine from L-serine: step 1/1. Functionally, catalyzes the reversible interconversion of serine and glycine with tetrahydrofolate (THF) serving as the one-carbon carrier. This reaction serves as the major source of one-carbon groups required for the biosynthesis of purines, thymidylate, methionine, and other important biomolecules. Also exhibits THF-independent aldolase activity toward beta-hydroxyamino acids, producing glycine and aldehydes, via a retro-aldol mechanism. The sequence is that of Serine hydroxymethyltransferase from Nitrosococcus oceani (strain ATCC 19707 / BCRC 17464 / JCM 30415 / NCIMB 11848 / C-107).